The sequence spans 761 residues: Protein spire homolog 1 (761 aa).

Disordered regions lie at residues 1–23 and 160–183; these read MTDGGMLISPSALQDPGDGARPE and DCPDEGYEATEEEDEGEEENAEVS. The region spanning 36-223 is the KIND domain; the sequence is LCLEEILTLY…RALYAETKEL (188 aa). Over residues 160–180 the composition is skewed to acidic residues; that stretch reads DCPDEGYEATEEEDEGEEENA. Residues 218–246 are a coiled coil; that stretch reads AETKELRTFLEKIKSAKENLRKMEGETEE. 2 consecutive WH2 domains span residues 295–313 and 359–376; these read PYEMLMDDIRSKRYKLRKV and LHERILEEIRSERKLRPV. Disordered regions lie at residues 375 to 406 and 419 to 539; these read PVSPDMIRRSRLGAGKSISTPQDLFRSSDIPD and ANGT…KSLA. The span at 469–480 shows a compositional bias: low complexity; the sequence is SSSSISTSLVED. Positions 504-520 are enriched in basic and acidic residues; that stretch reads PDKRIAPQRRHSIEKEA. The tract at residues 557-577 is spir-box; it reads LTLTVEEVMHIRQVLVKAELE. 2 disordered regions span residues 630–694 and 728–761; these read PSKP…DELE and STKRARLHRRTHSVYSSSTSSSNYKPTERTIKEV. Residues 636-647 are compositionally biased toward low complexity; that stretch reads SLPISSLGPSIL. Positions 682 to 693 are enriched in basic and acidic residues; the sequence is KHGDRSSSKDEL. The span at 728-739 shows a compositional bias: basic residues; sequence STKRARLHRRTH. Residues 740-749 are compositionally biased toward low complexity; the sequence is SVYSSSTSSS.

This sequence belongs to the spire family.

The protein resides in the cytoplasm. The protein localises to the cytoskeleton. It is found in the cytosol. It localises to the cleavage furrow. Its subcellular location is the perinuclear region. The protein resides in the cell membrane. The protein localises to the cytoplasmic vesicle membrane. Acts as an actin nucleation factor, remains associated with the slow-growing pointed end of the new filament. Involved in intracellular vesicle transport along actin fibers, providing a novel link between actin cytoskeleton dynamics and intracellular transport. Required for asymmetric spindle positioning and asymmetric cell division during meiosis. Required for normal formation of the cleavage furrow and for polar body extrusion during female germ cell meiosis. Also acts in the nucleus: together with FMN2, promotes assembly of nuclear actin filaments in response to DNA damage in order to facilitate movement of chromatin and repair factors after DNA damage. In addition, promotes innate immune signaling downstream of dsRNA sensing. Mechanistically, contributes to IRF3 phosphorylation and activation downstream of MAVS and upstream of TBK1. This chain is Protein spire homolog 1, found in Danio rerio (Zebrafish).